A 64-amino-acid polypeptide reads, in one-letter code: UPF0337 protein SAR0874 (64 aa).

The disordered stretch occupies residues 1-40 (MADESKFEQAKGNVKETVGNVTDNKNLENEGKEDKASGKA). The span at 25 to 40 (KNLENEGKEDKASGKA) shows a compositional bias: basic and acidic residues.

Belongs to the UPF0337 (CsbD) family.

This is UPF0337 protein SAR0874 from Staphylococcus aureus (strain MRSA252).